A 132-amino-acid chain; its full sequence is Chemokine-like protein TAFA-5 (132 aa).

The first 43 residues, 1 to 43 (MAPSPRTSSRQDATALPSMSSTFWAFMILASLLIAYCSQLAAG), serve as a signal peptide directing secretion. N-linked (GlcNAc...) asparagine glycosylation is present at asparagine 113.

The protein belongs to the TAFA family. As to expression, expressed in the subcutaneous, brown, epididymal and perirenal adipose tissue (at protein level).

It is found in the secreted. Acts as a chemokine-like protein by regulating cell proliferation and migration through activation of G protein-coupled receptors (GPCRs), such as S1PR2 and FPR2. Stimulates chemotactic migration of macrophages mediated by the MAPK3/ERK1 and AKT1 pathway. Blocks TNFSF11/RANKL-induced osteoclast formation from macrophages by inhibiting up-regulation of osteoclast fusogenic and differentiation genes. Stimulation of macrophage migration and inhibition of osteoclast formation is mediated through the GPCR FPR2. Acts as an adipokine by negatively regulating vascular smooth muscle cell (VSMC) proliferation and migration in response to platelet-derived growth factor stimulation via GPCR S1PR2 and G protein GNA12/GNA13-transmitted RHOA signaling. Inhibits injury-induced cell proliferation and neointima formation in the femoral arteries. This chain is Chemokine-like protein TAFA-5 (Tafa5), found in Mus musculus (Mouse).